Reading from the N-terminus, the 298-residue chain is Movement protein BC1 (298 aa).

Belongs to the begomovirus movement protein BC1 family. In terms of assembly, binds to dimeric supercoiled plasmid DNA. Phosphorylated.

The protein localises to the host cell membrane. The protein resides in the host microsome membrane. It is found in the host endoplasmic reticulum membrane. Transports viral genome to neighboring plant cells directly through plasmosdesmata, without any budding. The movement protein allows efficient cell to cell propagation, by bypassing the host cell wall barrier. Begomovirus genome is shuttled out of nucleus by Nuclear shuttle protein (NSP) and the movement protein transports the DNA-NSP complex to cell plasmodesmata and facilitates further movement across the cell wall. This is Movement protein BC1 from Mungbean yellow mosaic virus (strain Vigna) (MYMV).